The following is a 277-amino-acid chain: Putative protein-disulfide oxidoreductase RC0029 (277 aa).

Positions 1-22 are cleaved as a signal peptide; the sequence is MRSIFIILIFLLFLSSCSEEKA. Positions 34–80 are disordered; the sequence is EHETQNNETSKATNQEAVNSENTTESIVPANDNNQTDEVSTPASQKQ. Positions 39–80 are enriched in polar residues; the sequence is NNETSKATNQEAVNSENTTESIVPANDNNQTDEVSTPASQKQ. One can recognise a Thioredoxin domain in the interval 76 to 265; it reads ASQKQKNPAI…ISTAVDKALE (190 aa). Cys118 and Cys121 form a disulfide bridge.

The protein belongs to the thioredoxin family. DsbA subfamily.

The protein localises to the periplasm. In terms of biological role, may be required for disulfide bond formation in some proteins. This is Putative protein-disulfide oxidoreductase RC0029 from Rickettsia conorii (strain ATCC VR-613 / Malish 7).